We begin with the raw amino-acid sequence, 280 residues long: Diaminopimelate epimerase (280 aa).

Substrate contacts are provided by Asn15 and Asn66. The active-site Proton donor is Cys75. Substrate contacts are provided by residues 76–77, Asn163, Asn196, and 214–215; these read GN and ER. Cys223 acts as the Proton acceptor in catalysis. 224 to 225 contacts substrate; sequence GT.

This sequence belongs to the diaminopimelate epimerase family. In terms of assembly, homodimer.

The protein resides in the cytoplasm. It carries out the reaction (2S,6S)-2,6-diaminopimelate = meso-2,6-diaminopimelate. It functions in the pathway amino-acid biosynthesis; L-lysine biosynthesis via DAP pathway; DL-2,6-diaminopimelate from LL-2,6-diaminopimelate: step 1/1. Catalyzes the stereoinversion of LL-2,6-diaminopimelate (L,L-DAP) to meso-diaminopimelate (meso-DAP), a precursor of L-lysine and an essential component of the bacterial peptidoglycan. In Phocaeicola vulgatus (strain ATCC 8482 / DSM 1447 / JCM 5826 / CCUG 4940 / NBRC 14291 / NCTC 11154) (Bacteroides vulgatus), this protein is Diaminopimelate epimerase.